The primary structure comprises 285 residues: Acetyl-coenzyme A carboxylase carboxyl transferase subunit beta (285 aa).

A CoA carboxyltransferase N-terminal domain is found at 33-285 (MWIKCSKCGK…TLGNILRMHS (253 aa)). Cys-37, Cys-40, Cys-56, and Cys-59 together coordinate Zn(2+). The segment at 37-59 (CSKCGKILYKSDVDDNFKVCPKC) adopts a C4-type zinc-finger fold.

This sequence belongs to the AccD/PCCB family. In terms of assembly, acetyl-CoA carboxylase is a heterohexamer composed of biotin carboxyl carrier protein (AccB), biotin carboxylase (AccC) and two subunits each of ACCase subunit alpha (AccA) and ACCase subunit beta (AccD). It depends on Zn(2+) as a cofactor.

The protein resides in the cytoplasm. It carries out the reaction N(6)-carboxybiotinyl-L-lysyl-[protein] + acetyl-CoA = N(6)-biotinyl-L-lysyl-[protein] + malonyl-CoA. The protein operates within lipid metabolism; malonyl-CoA biosynthesis; malonyl-CoA from acetyl-CoA: step 1/1. Functionally, component of the acetyl coenzyme A carboxylase (ACC) complex. Biotin carboxylase (BC) catalyzes the carboxylation of biotin on its carrier protein (BCCP) and then the CO(2) group is transferred by the transcarboxylase to acetyl-CoA to form malonyl-CoA. The polypeptide is Acetyl-coenzyme A carboxylase carboxyl transferase subunit beta (Clostridium acetobutylicum (strain ATCC 824 / DSM 792 / JCM 1419 / IAM 19013 / LMG 5710 / NBRC 13948 / NRRL B-527 / VKM B-1787 / 2291 / W)).